The chain runs to 356 residues: GTPase Obg (356 aa).

Positions 1–159 (MKFLDQAKVY…RWIWLRLKLI (159 aa)) constitute an Obg domain. Residues 160 to 328 (ADAGLVGLPN…ALYAIAQHLG (169 aa)) form the OBG-type G domain. GTP-binding positions include 166-173 (GLPNAGKS), 191-195 (FTTLH), 213-216 (DIPG), 280-283 (NKID), and 309-311 (SGV). Ser-173 and Thr-193 together coordinate Mg(2+). The tract at residues 333 to 356 (DIPLPKPSNADEEDPDTDQPWSPV) is disordered.

The protein belongs to the TRAFAC class OBG-HflX-like GTPase superfamily. OBG GTPase family. As to quaternary structure, monomer. The cofactor is Mg(2+).

The protein localises to the cytoplasm. In terms of biological role, an essential GTPase which binds GTP, GDP and possibly (p)ppGpp with moderate affinity, with high nucleotide exchange rates and a fairly low GTP hydrolysis rate. Plays a role in control of the cell cycle, stress response, ribosome biogenesis and in those bacteria that undergo differentiation, in morphogenesis control. The sequence is that of GTPase Obg from Hyphomonas neptunium (strain ATCC 15444).